The sequence spans 120 residues: U-scoloptoxin(16)-Er2a (120 aa).

The N-terminal stretch at 1 to 26 (MNTVSVVQFLAVGCAVFVLYGRGVFA) is a signal peptide.

It belongs to the scoloptoxin-16 family. Contains 4 disulfide bonds. In terms of tissue distribution, expressed by the venom gland.

It is found in the secreted. The sequence is that of U-scoloptoxin(16)-Er2a from Ethmostigmus rubripes (Giant centipede).